Here is a 469-residue protein sequence, read N- to C-terminus: tRNA(Ile)-lysidine synthase (469 aa).

ATP is bound at residue 26-31 (SGGPDS).

This sequence belongs to the tRNA(Ile)-lysidine synthase family.

It localises to the cytoplasm. The enzyme catalyses cytidine(34) in tRNA(Ile2) + L-lysine + ATP = lysidine(34) in tRNA(Ile2) + AMP + diphosphate + H(+). Ligates lysine onto the cytidine present at position 34 of the AUA codon-specific tRNA(Ile) that contains the anticodon CAU, in an ATP-dependent manner. Cytidine is converted to lysidine, thus changing the amino acid specificity of the tRNA from methionine to isoleucine. This Clostridium perfringens (strain 13 / Type A) protein is tRNA(Ile)-lysidine synthase.